We begin with the raw amino-acid sequence, 159 residues long: Ribosomal RNA large subunit methyltransferase H (159 aa).

S-adenosyl-L-methionine contacts are provided by residues L76, G108, and 127 to 132 (FSKMTL).

This sequence belongs to the RNA methyltransferase RlmH family. As to quaternary structure, homodimer.

The protein localises to the cytoplasm. It catalyses the reaction pseudouridine(1915) in 23S rRNA + S-adenosyl-L-methionine = N(3)-methylpseudouridine(1915) in 23S rRNA + S-adenosyl-L-homocysteine + H(+). Functionally, specifically methylates the pseudouridine at position 1915 (m3Psi1915) in 23S rRNA. The protein is Ribosomal RNA large subunit methyltransferase H of Bacillus mycoides (strain KBAB4) (Bacillus weihenstephanensis).